Reading from the N-terminus, the 173-residue chain is Ferric citrate uptake sigma factor FecI (173 aa).

The short motif at 40–52 (DIAQDTFLRVMVS) is the Polymerase core binding element. The segment at residues 139-158 (YSEIAHKLGVSISSVKKYVA) is a DNA-binding region (H-T-H motif).

The protein belongs to the sigma-70 factor family. ECF subfamily. In terms of assembly, interacts with FecR (via cytoplasmic N-terminus).

In terms of biological role, sigma factors are initiation factors that promote the attachment of RNA polymerase to specific initiation sites and are then released. This sigma factor regulates transcriptional activation of the fecABCDE operon which mediates ferric citrate transport. The protein is Ferric citrate uptake sigma factor FecI (fecI) of Escherichia coli (strain K12).